A 131-amino-acid chain; its full sequence is Small ribosomal subunit protein uS8c (131 aa).

The protein belongs to the universal ribosomal protein uS8 family. Part of the 30S ribosomal subunit.

Its subcellular location is the plastid. It localises to the chloroplast. In terms of biological role, one of the primary rRNA binding proteins, it binds directly to 16S rRNA central domain where it helps coordinate assembly of the platform of the 30S subunit. The polypeptide is Small ribosomal subunit protein uS8c (rps8) (Tupiella akineta (Green alga)).